The primary structure comprises 252 residues: Small ribosomal subunit protein uS2 (252 aa).

An N-acetylserine modification is found at serine 2. The span at 213–222 shows a compositional bias: low complexity; sequence QVAEETAGAA. Residues 213-252 are disordered; the sequence is QVAEETAGAATEEEEAKEEVTEEQTEATEWAEETTEAVAW. Positions 223-252 are enriched in acidic residues; it reads TEEEEAKEEVTEEQTEATEWAEETTEAVAW.

This sequence belongs to the universal ribosomal protein uS2 family. As to quaternary structure, component of the small ribosomal subunit. Mature ribosomes consist of a small (40S) and a large (60S) subunit. The 40S subunit contains about 33 different proteins and 1 molecule of RNA (18S). The 60S subunit contains about 49 different proteins and 3 molecules of RNA (25S, 5.8S and 5S). Interacts with RPS21.

It is found in the cytoplasm. In terms of biological role, required for the assembly and/or stability of the 40S ribosomal subunit. Required for the processing of the 20S rRNA-precursor to mature 18S rRNA in a late step of the maturation of 40S ribosomal subunits. In Zygosaccharomyces rouxii (strain ATCC 2623 / CBS 732 / NBRC 1130 / NCYC 568 / NRRL Y-229), this protein is Small ribosomal subunit protein uS2.